The primary structure comprises 419 residues: Glutamyl-tRNA reductase (419 aa).

Residues 49–52 (TCNR), Ser-107, 112–114 (EPQ), and Gln-118 each bind substrate. Cys-50 functions as the Nucleophile in the catalytic mechanism. 187–192 (GAGETI) lines the NADP(+) pocket.

This sequence belongs to the glutamyl-tRNA reductase family. As to quaternary structure, homodimer.

The catalysed reaction is (S)-4-amino-5-oxopentanoate + tRNA(Glu) + NADP(+) = L-glutamyl-tRNA(Glu) + NADPH + H(+). It functions in the pathway porphyrin-containing compound metabolism; protoporphyrin-IX biosynthesis; 5-aminolevulinate from L-glutamyl-tRNA(Glu): step 1/2. In terms of biological role, catalyzes the NADPH-dependent reduction of glutamyl-tRNA(Glu) to glutamate 1-semialdehyde (GSA). This Vibrio cholerae serotype O1 (strain ATCC 39541 / Classical Ogawa 395 / O395) protein is Glutamyl-tRNA reductase.